The chain runs to 363 residues: Ferredoxin--NADP reductase, cyanelle (363 aa).

A cyanelle-targeting transit peptide spans 1 to 65 (MAFVASVPVF…TFEVDTTIRA (65 aa)). The FAD-binding FR-type domain occupies 84–206 (ANPYIGKCIY…TGPVGTTMLM (123 aa)). FAD contacts are provided by residues 142-145 (RLYS), 163-165 (SVK), tyrosine 169, 180-182 (VCS), and threonine 221. Residues serine 145 and lysine 165 each contribute to the NADP(+) site. NADP(+) is bound by residues threonine 221, 253–254 (VP), 283–284 (SR), lysine 293, 322–323 (GL), and glutamate 361.

The protein belongs to the ferredoxin--NADP reductase type 1 family. The cofactor is FAD.

It localises to the plastid. The protein resides in the cyanelle stroma. It is found in the cyanelle thylakoid membrane. The enzyme catalyses 2 reduced [2Fe-2S]-[ferredoxin] + NADP(+) + H(+) = 2 oxidized [2Fe-2S]-[ferredoxin] + NADPH. In terms of biological role, may play a key role in regulating the relative amounts of cyclic and non-cyclic electron flow to meet the demands of the plant for ATP and reducing power. This is Ferredoxin--NADP reductase, cyanelle (PETH) from Cyanophora paradoxa.